A 675-amino-acid chain; its full sequence is UvrABC system protein B (675 aa).

The 386-residue stretch at 32–417 folds into the Helicase ATP-binding domain; it reads EGLSDGLAYQ…EHAGQVVEQV (386 aa). Position 45–52 (45–52) interacts with ATP; the sequence is GVTGSGKT. Residues 98–121 carry the Beta-hairpin motif; sequence YYDYYQPEAYVPSRDLFIEKDSAI. A Helicase C-terminal domain is found at 436-602; sequence QVDDLMSEIN…QIKKQVKDII (167 aa). The UVR domain occupies 634–669; that stretch reads IKEIAKLEKAMQQAARDLQFEEAAVLRDRIRNIKEN.

The protein belongs to the UvrB family. As to quaternary structure, forms a heterotetramer with UvrA during the search for lesions. Interacts with UvrC in an incision complex.

It is found in the cytoplasm. The UvrABC repair system catalyzes the recognition and processing of DNA lesions. A damage recognition complex composed of 2 UvrA and 2 UvrB subunits scans DNA for abnormalities. Upon binding of the UvrA(2)B(2) complex to a putative damaged site, the DNA wraps around one UvrB monomer. DNA wrap is dependent on ATP binding by UvrB and probably causes local melting of the DNA helix, facilitating insertion of UvrB beta-hairpin between the DNA strands. Then UvrB probes one DNA strand for the presence of a lesion. If a lesion is found the UvrA subunits dissociate and the UvrB-DNA preincision complex is formed. This complex is subsequently bound by UvrC and the second UvrB is released. If no lesion is found, the DNA wraps around the other UvrB subunit that will check the other stand for damage. This is UvrABC system protein B from Neisseria meningitidis serogroup A / serotype 4A (strain DSM 15465 / Z2491).